Here is a 241-residue protein sequence, read N- to C-terminus: Homeobox protein TGIF2LX (241 aa).

Disordered stretches follow at residues 1–58 (MEAA…GNLP) and 127–207 (GKGA…ELVS). Over residues 10-39 (ETQSPVQKDSPAKTQSPAQDTSIMSRNNAD) the composition is skewed to polar residues. Positions 48-111 (EHKKKRKGNL…INARRRILPD (64 aa)) form a DNA-binding region, homeobox; TALE-type.

This sequence belongs to the TALE/TGIF homeobox family.

It is found in the nucleus. Functionally, may have a transcription role in testis. The chain is Homeobox protein TGIF2LX (TGIF2LX) from Pan paniscus (Pygmy chimpanzee).